We begin with the raw amino-acid sequence, 523 residues long: NAD(P) transhydrogenase subunit alpha (523 aa).

Over 1-411 (MKIGAPREIF…AEIATFRKQT (411 aa)) the chain is Cytoplasmic. Residues 127–130 (QKMD), Val177, 197–199 (DVR), and Gly229 each bind NAD(+). 2 helical membrane passes run 412–432 (VSQV…GMYA) and 433–455 (PPSF…QVIW). At 456 to 464 (NVSHSLHTP) the chain is on the cytoplasmic side. A helical transmembrane segment spans residues 465–485 (LMAVTNAISGIVILGALLQIG). The Periplasmic portion of the chain corresponds to 486–489 (SGNV). Residues 490–510 (LVVLLAAISVLIATINIVGGF) traverse the membrane as a helical segment. Residues 511 to 523 (LVTRRMLAMFQKS) are Cytoplasmic-facing.

The protein belongs to the AlaDH/PNT family. As to quaternary structure, heterodimer of an alpha (PntA) and a beta (PntB) chain.

The protein resides in the cell inner membrane. It catalyses the reaction NAD(+) + NADPH + H(+)(in) = NADH + NADP(+) + H(+)(out). The transhydrogenation between NADH and NADP is coupled to respiration and ATP hydrolysis and functions as a proton pump across the membrane. This is NAD(P) transhydrogenase subunit alpha from Cereibacter sphaeroides (Rhodobacter sphaeroides).